The primary structure comprises 341 residues: Protein FAM50A (341 aa).

Disordered stretches follow at residues 1 to 27 (MAQY…EREQ) and 80 to 147 (LVKE…EIEE). Residues 80-115 (LVKEREKQLAKKEQSKELQLKLEKQKEKKRKEEQKR) show a composition bias toward basic and acidic residues. Over residues 125-147 (DEGEDEEEEEEEEEEEEEDEIEE) the composition is skewed to acidic residues.

Belongs to the FAM50 family.

The protein resides in the nucleus. Its function is as follows. Probably involved in the regulation of pre-mRNA splicing. This is Protein FAM50A (fam50a) from Danio rerio (Zebrafish).